Reading from the N-terminus, the 91-residue chain is Non-specific lipid-transfer protein P5 (91 aa).

4 cysteine pairs are disulfide-bonded: Cys3–Cys50, Cys13–Cys27, Cys28–Cys73, and Cys48–Cys87.

The protein resides in the secreted. Plant non-specific lipid-transfer proteins transfer phospholipids as well as galactolipids across membranes. May play a role in wax or cutin deposition in the cell walls of expanding epidermal cells and certain secretory tissues. In Vitis sp. (Grape), this protein is Non-specific lipid-transfer protein P5.